The chain runs to 143 residues: Nucleoside diphosphate kinase (143 aa).

Residues Lys11, Phe59, Arg87, Thr93, Arg104, and Asn114 each contribute to the ATP site. Residue His117 is the Pros-phosphohistidine intermediate of the active site.

Belongs to the NDK family. In terms of assembly, homotetramer. It depends on Mg(2+) as a cofactor.

The protein resides in the cytoplasm. The enzyme catalyses a 2'-deoxyribonucleoside 5'-diphosphate + ATP = a 2'-deoxyribonucleoside 5'-triphosphate + ADP. The catalysed reaction is a ribonucleoside 5'-diphosphate + ATP = a ribonucleoside 5'-triphosphate + ADP. In terms of biological role, major role in the synthesis of nucleoside triphosphates other than ATP. The ATP gamma phosphate is transferred to the NDP beta phosphate via a ping-pong mechanism, using a phosphorylated active-site intermediate. The sequence is that of Nucleoside diphosphate kinase from Shewanella frigidimarina (strain NCIMB 400).